The sequence spans 120 residues: Spermidine export protein MdtJ (120 aa).

Helical transmembrane passes span 1–21 (MFYWILLALAIATEITGTLSM), 31–51 (AGFILMLVMITLSYIFLSFAV), 54–74 (IALGVAYALWEGIGILFITIF), and 81–101 (EALSTMKIAGLLTLVAGIVLI).

This sequence belongs to the drug/metabolite transporter (DMT) superfamily. Small multidrug resistance (SMR) (TC 2.A.7.1) family. MdtJ subfamily. As to quaternary structure, forms a complex with MdtI.

Its subcellular location is the cell inner membrane. In terms of biological role, catalyzes the excretion of spermidine. The polypeptide is Spermidine export protein MdtJ (Salmonella paratyphi A (strain ATCC 9150 / SARB42)).